A 437-amino-acid chain; its full sequence is GTPase Obg (437 aa).

The 159-residue stretch at 2-160 (SMFLDTAKIS…RQLELELKIL (159 aa)) folds into the Obg domain. The 178-residue stretch at 161 to 338 (ADVGLVGFPS…LLEATAELLA (178 aa)) folds into the OBG-type G domain. Residues 167 to 174 (GFPSVGKS), 192 to 196 (FTTIV), 214 to 217 (DLPG), 284 to 287 (NKMD), and 319 to 321 (SSL) contribute to the GTP site. S174 and T194 together coordinate Mg(2+). One can recognise an OCT domain in the interval 359–437 (GFAKTEKDFE…IGKFEFEFVD (79 aa)).

It belongs to the TRAFAC class OBG-HflX-like GTPase superfamily. OBG GTPase family. In terms of assembly, monomer. The cofactor is Mg(2+).

The protein localises to the cytoplasm. An essential GTPase which binds GTP, GDP and possibly (p)ppGpp with moderate affinity, with high nucleotide exchange rates and a fairly low GTP hydrolysis rate. Plays a role in control of the cell cycle, stress response, ribosome biogenesis and in those bacteria that undergo differentiation, in morphogenesis control. The chain is GTPase Obg from Streptococcus pyogenes serotype M2 (strain MGAS10270).